A 418-amino-acid polypeptide reads, in one-letter code: Sprouty-related, EVH1 domain-containing protein 2 (418 aa).

The WH1 domain occupies 5-122 (THPDDDSYIV…RGVRKAIEDL (118 aa)). A disordered region spans residues 127-172 (TTSSSTIHNEAELGDDDVFTTATDSSSNSSQKREQPTRTVSSPTSC). Over residues 146 to 156 (TTATDSSSNSS) the composition is skewed to polar residues. In terms of domain architecture, KBD spans 201–257 (PYRQVSFPDDDEEIVRINPREKIWMTGYEDYRHAPVRGKYPDPSEDVDSSYVRFAKG). Residue Ser-206 is modified to Phosphoserine. Phosphotyrosine occurs at positions 228 and 231. A disordered region spans residues 275-302 (GLGEDPKGRGGSVIKTQPSRGKSRRRKE). Residues 308 to 416 (RCVYCRDMFN…CRCCGGKHKA (109 aa)) form the SPR domain.

In terms of assembly, homodimer and heterodimer. Able to interact with SPRED1 to form heterodimers. Interacts with RAS. May interact with ZDHHC13 (via ANK repeats) and ZDHHC17 (via ANK repeats). Interacts with TESK1. Interacts with NF1. Phosphorylated on serine and threonine residues. Phosphorylated on tyrosine. Phosphorylation of Tyr-228 and Tyr-231 are required for ubiquitination. In terms of processing, ubiquitinated; leading to degradation by the proteasome.

The protein localises to the cell membrane. It is found in the cytoplasmic vesicle. It localises to the secretory vesicle membrane. The protein resides in the cytoplasm. Negatively regulates Ras signaling pathways and downstream activation of MAP kinases. Recruits and translocates NF1 to the cell membrane, thereby enabling NF1-dependent hydrolysis of active GTP-bound Ras to inactive GDP-bound Ras. Inhibits fibroblast growth factor (FGF)-induced retinal lens fiber differentiation, probably by inhibiting FGF-mediated phosphorylation of ERK1/2. Inhibits TGFB-induced epithelial-to-mesenchymal transition in lens epithelial cells. The polypeptide is Sprouty-related, EVH1 domain-containing protein 2 (SPRED2) (Pongo abelii (Sumatran orangutan)).